Consider the following 921-residue polypeptide: Isoleucine--tRNA ligase (921 aa).

The 'HIGH' region motif lies at 57–67; it reads PYANGDIHMGH. An L-isoleucyl-5'-AMP-binding site is contributed by Glu552. Positions 593–597 match the 'KMSKS' region motif; it reads KMSKS. Lys596 lines the ATP pocket. The Zn(2+) site is built by Cys888, Cys891, Cys908, and Cys911.

Belongs to the class-I aminoacyl-tRNA synthetase family. IleS type 1 subfamily. In terms of assembly, monomer. Zn(2+) serves as cofactor.

The protein resides in the cytoplasm. It carries out the reaction tRNA(Ile) + L-isoleucine + ATP = L-isoleucyl-tRNA(Ile) + AMP + diphosphate. Its function is as follows. Catalyzes the attachment of isoleucine to tRNA(Ile). As IleRS can inadvertently accommodate and process structurally similar amino acids such as valine, to avoid such errors it has two additional distinct tRNA(Ile)-dependent editing activities. One activity is designated as 'pretransfer' editing and involves the hydrolysis of activated Val-AMP. The other activity is designated 'posttransfer' editing and involves deacylation of mischarged Val-tRNA(Ile). The polypeptide is Isoleucine--tRNA ligase (Bacillus cereus (strain G9842)).